The chain runs to 165 residues: MRGLGHEGERDFQIIGGAKPVRVLVRLHRRVLFKLNAPLQLGVTSYCGAMPSCSEKTGSAPNPGSSAPAPAQKKTARCSSLPTHFIFTTPPPPPVSSTLQKGPTGAGCVTAARPAPSSGRQGGGGALYLQFSVRRGSFVSPRAPRAAAQRTCPFSWHRIMSARNV.

A disordered region spans residues 53–123; sequence CSEKTGSAPN…PAPSSGRQGG (71 aa). Positions 58–71 are enriched in low complexity; the sequence is GSAPNPGSSAPAPA.

This is an uncharacterized protein from Treponema pallidum (strain Nichols).